A 1038-amino-acid chain; its full sequence is Protein transport protein SEC24 A (1038 aa).

Residues 1 to 247 (MGTENQGYPN…PPHTGGFAQR (247 aa)) form a disordered region. Pro residues predominate over residues 22-33 (SAPPPGIPPQSG). Positions 371, 374, 393, and 396 each coordinate Zn(2+). The tract at residues 371–396 (CRRCRTYVNPFVTFTDSGRKWRCNIC) is zinc finger-like.

It belongs to the SEC23/SEC24 family. SEC24 subfamily. As to quaternary structure, component of the coat protein complex II (COPII), composed of at least five proteins: the Sec23/24 complex, the Sec13/31 complex and Sar1. Interacts with SEC221, SEC23E/SEC23A, SEC23B, SEC23G/SEC23C and SEC23F/SEC23D. (Microbial infection) Interacts with turnip mosaic virus (TuMV) 6K2 in COPII-coated vesicles. Mainly expressed in pollen, leaves, inflorescences, roots and stems, and, to a lower extent, in cotyledons, petioles and hypocotyls.

The protein localises to the cytoplasmic vesicle. It is found in the COPII-coated vesicle membrane. Its subcellular location is the endoplasmic reticulum membrane. The protein resides in the golgi apparatus membrane. It localises to the cytoplasm. The protein localises to the cytosol. In terms of biological role, essential protein. Component of the coat protein complex II (COPII), that covers ER-derived vesicles involved in transport from the endoplasmic reticulum to the Golgi apparatus. COPII is composed of at least five proteins: the SEC23/24 complex, the SEC13/31 complex, and the protein SAR1. Acts in the cytoplasm to promote the transport of secretory, plasma membrane, and vacuolar proteins from the endoplasmic reticulum to the Golgi complex. Involved in maintaining the dynamic identity of organelles of the early secretory pathway. Regulates cell size patterning, and prevents CDKA;1-, DEK1- and ACR4-dependent endoreduplication and giant cells formation in sepals. Required for male gametophytes (pollen grains) development and transmission. Its function is as follows. (Microbial infection) Contributes to viral systemic infection of turnip mosaic virus (TuMV) by triggering the formation of host endoplasmic reticulum (ER)-derived viral vesicles that carry the viral RNA (vRNA) to plasmodesmata for cell-to-cell viral movement. The protein is Protein transport protein SEC24 A of Arabidopsis thaliana (Mouse-ear cress).